Reading from the N-terminus, the 215-residue chain is MKAFTQHTGLVCPLDRANVDTDQIIPKQFLKSIKRTGFGPNLFDEWRYLDVGQPNQDCSQRPLNKDFVLNFPRYQGASVLLARENFGCGSSREHAPWALEEYGFRAIIAPSFADIFYNNSFKNGLLPIVLKEEEVDELFQQAEATEGYQLTVDLAAQTVTRPDGKQYGFEVDAFRKHCLLNGLDDIGLTLQDAEAIKAFEVRHQQSQPWLFGAIK.

This sequence belongs to the LeuD family. LeuD type 1 subfamily. In terms of assembly, heterodimer of LeuC and LeuD.

The enzyme catalyses (2R,3S)-3-isopropylmalate = (2S)-2-isopropylmalate. The protein operates within amino-acid biosynthesis; L-leucine biosynthesis; L-leucine from 3-methyl-2-oxobutanoate: step 2/4. Catalyzes the isomerization between 2-isopropylmalate and 3-isopropylmalate, via the formation of 2-isopropylmaleate. This is 3-isopropylmalate dehydratase small subunit from Stutzerimonas stutzeri (strain A1501) (Pseudomonas stutzeri).